The sequence spans 372 residues: Oxysterol-binding protein 3 (372 aa).

Residues 1 to 10 (MGKSDRKLTE) show a composition bias toward basic and acidic residues. A disordered region spans residues 1–25 (MGKSDRKLTEENSIENGVKPGKLTE).

This sequence belongs to the OSBP family.

The sequence is that of Oxysterol-binding protein 3 (osbC) from Dictyostelium discoideum (Social amoeba).